A 129-amino-acid chain; its full sequence is Small ribosomal subunit protein uS11 (129 aa).

Belongs to the universal ribosomal protein uS11 family. Part of the 30S ribosomal subunit. Interacts with proteins S7 and S18. Binds to IF-3.

In terms of biological role, located on the platform of the 30S subunit, it bridges several disparate RNA helices of the 16S rRNA. Forms part of the Shine-Dalgarno cleft in the 70S ribosome. The sequence is that of Small ribosomal subunit protein uS11 from Lactiplantibacillus plantarum (strain ATCC BAA-793 / NCIMB 8826 / WCFS1) (Lactobacillus plantarum).